The following is a 414-amino-acid chain: FAD-dependent monooxygenase adaC (414 aa).

Residues glutamate 32, alanine 43, arginine 115, aspartate 325, and glycine 338 each contribute to the FAD site.

This sequence belongs to the paxM FAD-dependent monooxygenase family. Requires FAD as cofactor.

The catalysed reaction is 3-(2,4-dioxopentyl)-3,6,8,9-tetrahydroxy-1-oxo-1,2,3,4-tetrahydroanthracene-2-carboxyl-[ACP] + NADPH + O2 + H(+) = 3-(2,4-dioxopentyl)-2,3,6,8,9-pentahydroxy-1-oxo-1,2,3,4-tetrahydroanthracene-2-carboxyl-[ACP] + NADP(+) + H2O. Its pathway is secondary metabolite biosynthesis. Its function is as follows. FAD-dependent monooxygenase; part of the gene cluster that mediates the biosynthesis of the linear tetracyclic TAN-1612 neuropeptide Y receptor antagonist. The decaketide backbone of TAN-1612 is synthesized by the non-reducing polyketide synthase adaA via condensation of one acetyl-CoA starter unit with 9 malonyl-CoA units. The FAD-dependent monooxygenase adaC then performs hydroxylation at C2 while the polaketide chain is still attached to the NRPKS adaA. The alpha-hydroxylation step at C2 appears to be crucial for the following C18-C1 Claisen cyclization and release of the C9-hydroxyl version of TAN-1612 from the NRPKS adaA, two steps performed by the lactamase-like protein adaB. Finally, the O-methyltransferase adaD performs the C9 O-methylation to complete the biosynthesis of TAN-1612. The protein is FAD-dependent monooxygenase adaC of Aspergillus niger (strain ATCC MYA-4892 / CBS 513.88 / FGSC A1513).